A 302-amino-acid chain; its full sequence is Ribosome-binding factor PSRP1, chloroplastic (302 aa).

The N-terminal 66 residues, Met-1–Met-66, are a transit peptide targeting the chloroplast.

As to quaternary structure, binds to the mRNA channel of the chloroplast small ribosomal subunit and interacts with 16S sRNA nucleotides at the A-site and P-site.

It localises to the plastid. The protein resides in the chloroplast stroma. Ribosome-binding factor involved in light- and temperature-dependent control of protein synthesis. Interacts with 16S sRNA nucleotides at the A-site and P-site, where it protects the decoding center and inhibits translation by preventing tRNA binding. Stabilizes 70S ribosomes against dissociation. May be recycled by the combined action of ribosome-recycling factor (RRF) and EF-G. The polypeptide is Ribosome-binding factor PSRP1, chloroplastic (PSRP1) (Spinacia oleracea (Spinach)).